The primary structure comprises 239 residues: tRNA (guanine-N(1)-)-methyltransferase (239 aa).

S-adenosyl-L-methionine-binding positions include glycine 108 and 127-132 (LGDYVL).

It belongs to the RNA methyltransferase TrmD family. As to quaternary structure, homodimer.

It localises to the cytoplasm. It carries out the reaction guanosine(37) in tRNA + S-adenosyl-L-methionine = N(1)-methylguanosine(37) in tRNA + S-adenosyl-L-homocysteine + H(+). Functionally, specifically methylates guanosine-37 in various tRNAs. The chain is tRNA (guanine-N(1)-)-methyltransferase from Streptococcus pneumoniae (strain JJA).